The following is a 379-amino-acid chain: Transcription termination factor 1a, mitochondrial (379 aa).

The N-terminal 37 residues, 1 to 37 (MASRNIWCVRRNFLFDLRDWMLQYSAEVFLKSISFRP), are a transit peptide targeting the mitochondrion. 5 interaction with DNA regions span residues 151 to 152 (RS), 229 to 233 (QSTKR), 306 to 313 (SEKKFNDK), 337 to 340 (SINT), and 366 to 373 (SQRRYEAK).

The protein belongs to the mTERF family. In terms of assembly, monomer. In terms of processing, phosphoprotein with mostly four phosphate groups. While the DNA-binding activity is unaffected by the phosphorylation state, only the phosphorylated form of the protein is active for termination activity. Functioning seems to be regulated by phosphorylation. In terms of tissue distribution, predominantly expressed in heart and liver, with extremely low levels in other tissues. Expressed strongly in the heart and at lower levels in brain, liver and kidney.

The protein resides in the mitochondrion. Transcription termination factor. Binds to a 28 bp region within the tRNA(Leu(uur)) gene at a position immediately adjacent to and downstream of the 16S rRNA gene; this region comprises a tridecamer sequence critical for directing accurate termination. Binds DNA along the major grove and promotes DNA bending and partial unwinding. Promotes base flipping. Transcription termination activity appears to be polarized with highest specificity for transcripts initiated on the light strand. The chain is Transcription termination factor 1a, mitochondrial (Mterf1a) from Mus musculus (Mouse).